A 333-amino-acid polypeptide reads, in one-letter code: Uroporphyrinogen decarboxylase (333 aa).

Substrate-binding positions include 21 to 25 (RQVGR), Asp-70, Tyr-139, Ser-194, and His-309.

Belongs to the uroporphyrinogen decarboxylase family. Homodimer.

Its subcellular location is the cytoplasm. It carries out the reaction uroporphyrinogen III + 4 H(+) = coproporphyrinogen III + 4 CO2. It functions in the pathway porphyrin-containing compound metabolism; protoporphyrin-IX biosynthesis; coproporphyrinogen-III from 5-aminolevulinate: step 4/4. Its function is as follows. Catalyzes the decarboxylation of four acetate groups of uroporphyrinogen-III to yield coproporphyrinogen-III. The polypeptide is Uroporphyrinogen decarboxylase (Chlamydia abortus (strain DSM 27085 / S26/3) (Chlamydophila abortus)).